We begin with the raw amino-acid sequence, 439 residues long: MNLTPKEIVKFLDDYVIGQKKAKKIIAIALRNRYRRMQLSPELQDDIVPKNILMIGSTGVGKTEIARRLAKMMGFPFIKIEASKYTEVGFVGRDVESMVRDLANAALNLVKNEQREKNKDKIDEFIENKILEKLLPPLPKGISDEKQEEYKNSLEKMRTKLRNGDLDESTIEIEISQNMFDTNPNLPPEMGAMQDIVKVIGVGSKKVKKEMKIKDAKNALKNEAGEKILDQESIKSEALKRAENEGIIFIDEIDKIAVSSGNSNRQDPSKEGVQRDLLPIVEGSNVQTKIGTLKTDHILFIAAGAFHLSKPSDLIPELQGRFPLRVELDSLDDKALYEILTRPKNSLLKQYSQLLKTENLELEFDDEAIKEIAKIASRANEEMQDIGARRLHTVIEKLLEDLSFEADEYAGKKFVVDKKMVEEKLGDIIENKDLARYIL.

Residues isoleucine 17, 59–64, aspartate 251, glutamate 317, and arginine 389 contribute to the ATP site; that span reads GVGKTE.

It belongs to the ClpX chaperone family. HslU subfamily. As to quaternary structure, a double ring-shaped homohexamer of HslV is capped on each side by a ring-shaped HslU homohexamer. The assembly of the HslU/HslV complex is dependent on binding of ATP.

It is found in the cytoplasm. Its function is as follows. ATPase subunit of a proteasome-like degradation complex; this subunit has chaperone activity. The binding of ATP and its subsequent hydrolysis by HslU are essential for unfolding of protein substrates subsequently hydrolyzed by HslV. HslU recognizes the N-terminal part of its protein substrates and unfolds these before they are guided to HslV for hydrolysis. The chain is ATP-dependent protease ATPase subunit HslU from Campylobacter jejuni subsp. jejuni serotype O:2 (strain ATCC 700819 / NCTC 11168).